A 363-amino-acid chain; its full sequence is Mitochondrial phosphate carrier protein 2, mitochondrial (363 aa).

Residues 65 to 85 (AYFAACTVAGMLSCGITHTAI) form a helical membrane-spanning segment. Solcar repeat units follow at residues 65–149 (AYFA…AKKY), 162–246 (YKTL…TVEL), and 263–342 (VQLG…VKVL). Over 86-123 (TPLDVIKCNMQIDPLKYKNITSAFKTTIKEQGLKGFTR) the chain is Mitochondrial matrix. Residues 124 to 143 (GWSPTLLGYSAQGAFKYGLY) form a helical membrane-spanning segment. Residues 144 to 164 (EYAKKYYSDIVGPEYAAKYKT) are Mitochondrial intermembrane-facing. A helical membrane pass occupies residues 165 to 185 (LIYLAGSASAEIVADVALCPM). Topologically, residues 186-220 (EAVKVRVQTQPGFARGLSDGLPKIIKSEGFRGLHK) are mitochondrial matrix. A helical transmembrane segment spans residues 221-240 (GLVPLWGRQIPYTMMKFATF). At 241–261 (ENTVELIYKKVMPTPKEECSK) the chain is on the mitochondrial intermembrane side. A helical membrane pass occupies residues 262–282 (PVQLGVSFAGGYIAGIFCAII). Residues 283-321 (SHPADNLVSFLNNSKGATVADAVKRLGLWGMLTRGLPLR) are Mitochondrial matrix-facing. The chain crosses the membrane as a helical span at residues 322 to 342 (IFMIGTLTGAQWVIYDAVKVL). At 343 to 363 (AGLPTTGGASPATALAPSVSA) the chain is on the mitochondrial intermembrane side.

It belongs to the mitochondrial carrier (TC 2.A.29) family. As to expression, expressed in leaves. Strong expression in senescent leaves.

Its subcellular location is the mitochondrion inner membrane. Functionally, transport of phosphate groups from the cytosol to the mitochondrial matrix. Mediates salt stress tolerance through an ATP-dependent pathway and via modulation of the gibberellin metabolism. The polypeptide is Mitochondrial phosphate carrier protein 2, mitochondrial (MPT2) (Arabidopsis thaliana (Mouse-ear cress)).